A 431-amino-acid polypeptide reads, in one-letter code: Histidinol dehydrogenase (431 aa).

NAD(+)-binding residues include tyrosine 127, glutamine 189, and asparagine 212. 3 residues coordinate substrate: serine 237, glutamine 259, and histidine 262. Zn(2+) is bound by residues glutamine 259 and histidine 262. Residues glutamate 326 and histidine 327 each act as proton acceptor in the active site. Histidine 327, aspartate 360, glutamate 414, and histidine 419 together coordinate substrate. Position 360 (aspartate 360) interacts with Zn(2+). Histidine 419 contributes to the Zn(2+) binding site.

The protein belongs to the histidinol dehydrogenase family. The cofactor is Zn(2+).

It carries out the reaction L-histidinol + 2 NAD(+) + H2O = L-histidine + 2 NADH + 3 H(+). The protein operates within amino-acid biosynthesis; L-histidine biosynthesis; L-histidine from 5-phospho-alpha-D-ribose 1-diphosphate: step 9/9. Its function is as follows. Catalyzes the sequential NAD-dependent oxidations of L-histidinol to L-histidinaldehyde and then to L-histidine. The chain is Histidinol dehydrogenase from Xanthomonas euvesicatoria pv. vesicatoria (strain 85-10) (Xanthomonas campestris pv. vesicatoria).